The chain runs to 99 residues: Small ribosomal subunit protein eS24 (99 aa).

The protein belongs to the eukaryotic ribosomal protein eS24 family. In terms of assembly, may be present in 2 copies per 70S ribosome. Part of the 30S ribosomal subunit, where it binds 16S rRNA at its canonical site at the bse of the body, as well as a possible second 50S binding site near 23S rRNA helix 45.

The protein is Small ribosomal subunit protein eS24 of Pyrococcus furiosus (strain ATCC 43587 / DSM 3638 / JCM 8422 / Vc1).